A 226-amino-acid polypeptide reads, in one-letter code: Ribonuclease 3 (226 aa).

One can recognise an RNase III domain in the interval Ile6–Asp128. Glu41 is a binding site for Mg(2+). The active site involves Asp45. The Mg(2+) site is built by Asp114 and Glu117. Glu117 is an active-site residue. In terms of domain architecture, DRBM spans Asp155 to Ile225.

It belongs to the ribonuclease III family. As to quaternary structure, homodimer. It depends on Mg(2+) as a cofactor.

The protein localises to the cytoplasm. It carries out the reaction Endonucleolytic cleavage to 5'-phosphomonoester.. Its function is as follows. Digests double-stranded RNA. Involved in the processing of primary rRNA transcript to yield the immediate precursors to the large and small rRNAs (23S and 16S). Processes some mRNAs, and tRNAs when they are encoded in the rRNA operon. Processes pre-crRNA and tracrRNA of type II CRISPR loci if present in the organism. The sequence is that of Ribonuclease 3 from Erwinia tasmaniensis (strain DSM 17950 / CFBP 7177 / CIP 109463 / NCPPB 4357 / Et1/99).